Consider the following 299-residue polypeptide: MTAFQNAGPSITRLAPAKINLALHVTGRRDDGYHLLDMLVVFADHGDRIHIEKAGSDSFTVSGPFASGIPAGRGNLVLKARDALRQHGGPDLSPVAIHLEKNLPIASGIGGGSSDAAATLLALNTLWQLDLDFEMLAAIGLSLGADLPMCLHGAAHGTPLIARGIGEELNDVSGIAALPMLLVNDGTALATPDVFRALTRRENAPLPPPACEGTDALCAYLRETRNDLLPAAISLAPQIEPKLALLRAKGALYAQMSGSGATCFAIFSDESALTRAAKEIADENPGWFAVPSHSFPSRA.

Residue Lys18 is part of the active site. 104–114 is a binding site for ATP; it reads PIASGIGGGSS. Residue Asp146 is part of the active site.

Belongs to the GHMP kinase family. IspE subfamily.

The catalysed reaction is 4-CDP-2-C-methyl-D-erythritol + ATP = 4-CDP-2-C-methyl-D-erythritol 2-phosphate + ADP + H(+). It participates in isoprenoid biosynthesis; isopentenyl diphosphate biosynthesis via DXP pathway; isopentenyl diphosphate from 1-deoxy-D-xylulose 5-phosphate: step 3/6. Catalyzes the phosphorylation of the position 2 hydroxy group of 4-diphosphocytidyl-2C-methyl-D-erythritol. The sequence is that of 4-diphosphocytidyl-2-C-methyl-D-erythritol kinase from Brucella abortus biovar 1 (strain 9-941).